A 265-amino-acid polypeptide reads, in one-letter code: 4-hydroxy-tetrahydrodipicolinate reductase (265 aa).

Residues 7 to 12 (GASGRM) and aspartate 33 contribute to the NAD(+) site. Arginine 34 contacts NADP(+). NAD(+) contacts are provided by residues 96–98 (GTT) and 120–123 (AANM). The active-site Proton donor/acceptor is histidine 153. Residue histidine 154 coordinates (S)-2,3,4,5-tetrahydrodipicolinate. Lysine 157 (proton donor) is an active-site residue. 163 to 164 (GT) provides a ligand contact to (S)-2,3,4,5-tetrahydrodipicolinate.

It belongs to the DapB family.

The protein localises to the cytoplasm. It catalyses the reaction (S)-2,3,4,5-tetrahydrodipicolinate + NAD(+) + H2O = (2S,4S)-4-hydroxy-2,3,4,5-tetrahydrodipicolinate + NADH + H(+). The catalysed reaction is (S)-2,3,4,5-tetrahydrodipicolinate + NADP(+) + H2O = (2S,4S)-4-hydroxy-2,3,4,5-tetrahydrodipicolinate + NADPH + H(+). It functions in the pathway amino-acid biosynthesis; L-lysine biosynthesis via DAP pathway; (S)-tetrahydrodipicolinate from L-aspartate: step 4/4. Its function is as follows. Catalyzes the conversion of 4-hydroxy-tetrahydrodipicolinate (HTPA) to tetrahydrodipicolinate. This Burkholderia ambifaria (strain ATCC BAA-244 / DSM 16087 / CCUG 44356 / LMG 19182 / AMMD) (Burkholderia cepacia (strain AMMD)) protein is 4-hydroxy-tetrahydrodipicolinate reductase.